Reading from the N-terminus, the 385-residue chain is Deoxyguanosinetriphosphate triphosphohydrolase-like protein (385 aa).

A compositionally biased stretch (basic and acidic residues) spans 1–14 (MTEGVEGRSQERSD). Positions 1 to 23 (MTEGVEGRSQERSDLAGFAARSA) are disordered. Positions 75–204 (RLTHSLEVAQ…INYADEIAYN (130 aa)) constitute an HD domain.

This sequence belongs to the dGTPase family. Type 2 subfamily.

The protein is Deoxyguanosinetriphosphate triphosphohydrolase-like protein of Geobacter metallireducens (strain ATCC 53774 / DSM 7210 / GS-15).